The chain runs to 494 residues: UPF0371 protein M6_Spy1067 (494 aa).

The protein belongs to the UPF0371 family.

The protein is UPF0371 protein M6_Spy1067 of Streptococcus pyogenes serotype M6 (strain ATCC BAA-946 / MGAS10394).